The primary structure comprises 1935 residues: Myosin-7 (1935 aa).

The Myosin N-terminal SH3-like domain maps to 32 to 81 (DLKKDVYVPDDKEEFVKAKILSREGGKVTAETEHGKTVTVKEDQVLQQNP). Residues 85–778 (DKIEDMAMLT…LLGLLEEMRD (694 aa)) form the Myosin motor domain. An N6,N6,N6-trimethyllysine modification is found at Lys129. 178–185 (GESGAGKT) lines the ATP pocket. At Thr378 the chain carries Phosphothreonine. 2 actin-binding regions span residues 655 to 677 (LNKL…IPNE) and 757 to 771 (KFGH…GLLG). An IQ domain is found at 781-810 (LSRIITRIQAQSRGVLSRMEFKKLLERRDS). A coiled-coil region spans residues 839 to 1935 (LLKSAETEKE…DIGTKGLNEE (1097 aa)). A phosphoserine mark is found at Ser1137 and Ser1269. Phosphothreonine is present on Thr1282. Position 1308 is a phosphotyrosine (Tyr1308). Thr1309 carries the post-translational modification Phosphothreonine. Ser1510 carries the phosphoserine modification. The residue at position 1513 (Thr1513) is a Phosphothreonine. Positions 1907-1935 (EERADIAESQVNKLRAKSRDIGTKGLNEE) are disordered. The span at 1923 to 1935 (KSRDIGTKGLNEE) shows a compositional bias: basic and acidic residues.

It belongs to the TRAFAC class myosin-kinesin ATPase superfamily. Myosin family. As to quaternary structure, muscle myosin is a hexameric protein that consists of 2 heavy chain subunits (MHC), 2 alkali light chain subunits (MLC) and 2 regulatory light chain subunits (MLC-2). Interacts with ECPAS. Interacts (via C-terminus) with LRRC39.

Its subcellular location is the cytoplasm. It localises to the myofibril. It is found in the sarcomere. Its function is as follows. Myosins are actin-based motor molecules with ATPase activity essential for muscle contraction. Forms regular bipolar thick filaments that, together with actin thin filaments, constitute the fundamental contractile unit of skeletal and cardiac muscle. The sequence is that of Myosin-7 (MYH7) from Sus scrofa (Pig).